The chain runs to 558 residues: Formate--tetrahydrofolate ligase 2 (558 aa).

67-74 is an ATP binding site; sequence TPAGEGKT.

The protein belongs to the formate--tetrahydrofolate ligase family.

It catalyses the reaction (6S)-5,6,7,8-tetrahydrofolate + formate + ATP = (6R)-10-formyltetrahydrofolate + ADP + phosphate. The protein operates within one-carbon metabolism; tetrahydrofolate interconversion. The sequence is that of Formate--tetrahydrofolate ligase 2 from Desulfitobacterium hafniense (strain Y51).